A 639-amino-acid chain; its full sequence is MAAPSGVPPLRVLEELGIGLSPTGEVTEAVTSEGAYYLEQVTITETSEDECEYEEIPDDNFSIPEGEEDLEKAIHIIGEQARDIHILEQQTILPARNVMQEAIEDFLCNFLIKMGMTRTLDCFQAEWYELIQKKGSDFKGLGNVPDVYSQVMLLETENKNLKKELKHFKQAAEKAKEDLLRTQKERDFHRMHHKRIVQEKNKLIADLKGLKLHYASYEPTIRVLHEKHHALLKEKMLTSLERDRAVGKISGLQATLKNIDMGHIQVPVIKGSYESASITRESGDRAGHSCEKENSSEGPTQKSLREAREEVGYKSKLKNEKKDSEFPVDMQPDPNVTSCTENVSAAKFDYKLNNIFRLHELPVSCIVMHPCRDYLISCSEDRLWKMVGLPQGNVLLTGSGHTDWLSGCCFHPSGSKLATSSGDSTIKLWDLNKGECTLTLEGHNHAVWSCTWHSCGDFVASASLDMTSKIWDVNSERCRYTLYGHTDSVNSIEFFPFSNILLTASADKTLSVWDARTGKCEQSLYGHMHSVNDATFTPRGHIIASCDARGVTKLWDFRKLIPIVSIDVGPSSGNEVNFDQSGRVLAQASANGIIHLLDLKSGQIHKLVGHESEVHSVVFSHLGENLYSGGSDGTIRLWI.

Residues 146 to 218 (DVYSQVMLLE…GLKLHYASYE (73 aa)) are a coiled coil. The tract at residues 280 to 333 (RESGDRAGHSCEKENSSEGPTQKSLREAREEVGYKSKLKNEKKDSEFPVDMQPD) is disordered. Composition is skewed to basic and acidic residues over residues 281–295 (ESGD…KENS) and 303–325 (SLRE…KDSE). 7 WD repeats span residues 358 to 397 (LHEL…VLLT), 400 to 439 (GHTD…CTLT), 442 to 481 (GHNH…CRYT), 484 to 523 (GHTD…CEQS), 526 to 565 (GHMH…PIVS), 568 to 608 (VGPS…HKLV), and 609 to 639 (GHES…RLWI).

Interacts with SPAG6 and STK36. Post-translationally, phosphorylated by TSSK2. In terms of tissue distribution, expressed in testis.

It is found in the cytoplasm. The protein localises to the cytoskeleton. The protein resides in the cilium axoneme. Its subcellular location is the flagellum axoneme. It localises to the cell projection. It is found in the cilium. The protein localises to the flagellum. In terms of biological role, necessary for sperm flagellar function. Plays a role in motile ciliogenesis. May help to recruit STK36 to the cilium or apical surface of the cell to initiate subsequent steps of construction of the central pair apparatus of motile cilia. This is Sperm-associated antigen 16 protein (Spag16) from Mus musculus (Mouse).